The sequence spans 196 residues: Segregation and condensation protein B (196 aa).

This sequence belongs to the ScpB family. In terms of assembly, homodimer. Homodimerization may be required to stabilize the binding of ScpA to the Smc head domains. Component of a cohesin-like complex composed of ScpA, ScpB and the Smc homodimer, in which ScpA and ScpB bind to the head domain of Smc. The presence of the three proteins is required for the association of the complex with DNA.

It is found in the cytoplasm. Functionally, participates in chromosomal partition during cell division. May act via the formation of a condensin-like complex containing Smc and ScpA that pull DNA away from mid-cell into both cell halves. This chain is Segregation and condensation protein B, found in Lactobacillus johnsonii (strain CNCM I-12250 / La1 / NCC 533).